The following is a 522-amino-acid chain: Glutamate--cysteine ligase, chloroplastic (522 aa).

The N-terminal 45 residues, Met1–Ser45, are a transit peptide targeting the chloroplast. Cys186 and Cys406 are oxidised to a cystine.

This sequence belongs to the carboxylate-amine ligase family. Glutamate--cysteine ligase type 2 subfamily. In terms of assembly, homodimer or monomer when oxidized or reduced, respectively. The Cys-186-Cys-406 disulfide bridge is known to modulate the enzyme activity according to the redox status. The oxidized form constitutes the active enzyme.

It localises to the plastid. It is found in the chloroplast. It catalyses the reaction L-cysteine + L-glutamate + ATP = gamma-L-glutamyl-L-cysteine + ADP + phosphate + H(+). Its pathway is sulfur metabolism; glutathione biosynthesis; glutathione from L-cysteine and L-glutamate: step 1/2. This Nicotiana tabacum (Common tobacco) protein is Glutamate--cysteine ligase, chloroplastic (GSH1).